The sequence spans 505 residues: Maturase K (505 aa).

It belongs to the intron maturase 2 family. MatK subfamily.

It is found in the plastid. The protein resides in the chloroplast. Its function is as follows. Usually encoded in the trnK tRNA gene intron. Probably assists in splicing its own and other chloroplast group II introns. This chain is Maturase K, found in Illicium oligandrum (Star anise).